A 162-amino-acid polypeptide reads, in one-letter code: Protein-export protein SecB (162 aa).

It belongs to the SecB family. As to quaternary structure, homotetramer, a dimer of dimers. One homotetramer interacts with 1 SecA dimer.

It localises to the cytoplasm. One of the proteins required for the normal export of preproteins out of the cell cytoplasm. It is a molecular chaperone that binds to a subset of precursor proteins, maintaining them in a translocation-competent state. It also specifically binds to its receptor SecA. The chain is Protein-export protein SecB from Pseudoalteromonas translucida (strain TAC 125).